A 395-amino-acid chain; its full sequence is ATP synthase subunit a (395 aa).

The next 5 helical transmembrane spans lie at 153-173 (FTNP…LVYF), 246-266 (HFLI…IVGF), 273-293 (FLSF…LVLL), 313-333 (MMAG…MLCM), and 339-359 (FIGD…ELGV).

It belongs to the ATPase A chain family. As to quaternary structure, F-type ATPases have 2 components, CF(1) - the catalytic core - and CF(0) - the membrane proton channel. CF(1) has five subunits: alpha(3), beta(3), gamma(1), delta(1), epsilon(1). CF(0) has three main subunits: a, b and c.

Its subcellular location is the mitochondrion inner membrane. Its function is as follows. Mitochondrial membrane ATP synthase (F(1)F(0) ATP synthase or Complex V) produces ATP from ADP in the presence of a proton gradient across the membrane which is generated by electron transport complexes of the respiratory chain. F-type ATPases consist of two structural domains, F(1) - containing the extramembraneous catalytic core and F(0) - containing the membrane proton channel, linked together by a central stalk and a peripheral stalk. During catalysis, ATP synthesis in the catalytic domain of F(1) is coupled via a rotary mechanism of the central stalk subunits to proton translocation. Key component of the proton channel; it may play a direct role in the translocation of protons across the membrane. The polypeptide is ATP synthase subunit a (ATP6) (Nicotiana tabacum (Common tobacco)).